A 461-amino-acid polypeptide reads, in one-letter code: Cyclic 2,3-diphosphoglycerate synthetase (461 aa).

This sequence belongs to the cyclic 2,3-diphosphoglycerate synthetase family.

The protein resides in the cytoplasm. The catalysed reaction is (2R)-2,3-bisphosphoglycerate + ATP + H(+) = cyclic (2R)-2,3-bisphosphoglycerate + ADP + phosphate. Functionally, catalyzes the formation of cyclic 2,3-diphosphoglycerate (cDPG) by formation of an intramolecular phosphoanhydride bond at the expense of ATP. This chain is Cyclic 2,3-diphosphoglycerate synthetase, found in Methanosphaera stadtmanae (strain ATCC 43021 / DSM 3091 / JCM 11832 / MCB-3).